The following is a 334-amino-acid chain: ADP-L-glycero-D-manno-heptose-6-epimerase (334 aa).

NADP(+) contacts are provided by residues 11–12, 32–33, Lys-39, Lys-54, 77–81, and Asn-94; these read FI, DN, and QGACS. The active-site Proton acceptor is the Tyr-141. Lys-145 is a binding site for NADP(+). A substrate-binding site is contributed by Asn-171. Residues Val-172 and Lys-180 each coordinate NADP(+). Lys-180 acts as the Proton acceptor in catalysis. Substrate is bound by residues Arg-182, His-189, 203–206, Arg-216, and Tyr-295; that span reads FGSN.

The protein belongs to the NAD(P)-dependent epimerase/dehydratase family. HldD subfamily. As to quaternary structure, homopentamer. It depends on NADP(+) as a cofactor.

It carries out the reaction ADP-D-glycero-beta-D-manno-heptose = ADP-L-glycero-beta-D-manno-heptose. It participates in nucleotide-sugar biosynthesis; ADP-L-glycero-beta-D-manno-heptose biosynthesis; ADP-L-glycero-beta-D-manno-heptose from D-glycero-beta-D-manno-heptose 7-phosphate: step 4/4. It functions in the pathway bacterial outer membrane biogenesis; LOS core biosynthesis. Catalyzes the interconversion between ADP-D-glycero-beta-D-manno-heptose and ADP-L-glycero-beta-D-manno-heptose via an epimerization at carbon 6 of the heptose. The sequence is that of ADP-L-glycero-D-manno-heptose-6-epimerase from Neisseria gonorrhoeae.